The chain runs to 521 residues: Cytochrome P450 monooxygenase 105 (521 aa).

Residues 12–32 (GVASPATLAVAAVTFLTALVL) form a helical membrane-spanning segment. N-linked (GlcNAc...) asparagine glycosylation is found at asparagine 218, asparagine 274, and asparagine 317. Position 449 (cysteine 449) interacts with heme.

Belongs to the cytochrome P450 family. The cofactor is heme.

The protein resides in the membrane. The protein operates within secondary metabolite biosynthesis. In terms of biological role, cytochrome P450 monooxygenase that is able to use anthracene, carbazole, pyrene, phenanthrene and trans-stilbene as substrates for oxidation. These multifunctional properties against a series of polycyclic aromatic hydrocarbons (PAHs) suggest that CYP105 would play important roles, at least in part, in fungal metabolic systems involved in xenobiotic detoxification. In Postia placenta (strain ATCC 44394 / Madison 698-R) (Brown rot fungus), this protein is Cytochrome P450 monooxygenase 105.